The primary structure comprises 87 residues: Large ribosomal subunit protein bL31B-2/bL31B-3 (87 aa).

Belongs to the bacterial ribosomal protein bL31 family. Type B subfamily. As to quaternary structure, part of the 50S ribosomal subunit.

This chain is Large ribosomal subunit protein bL31B-2/bL31B-3 (rpmE2-2), found in Escherichia coli O157:H7.